The primary structure comprises 270 residues: Acetylglutamate kinase (270 aa).

Substrate is bound by residues 41–42 (GG), R63, and N166.

The protein belongs to the acetylglutamate kinase family. ArgB subfamily.

It is found in the cytoplasm. The catalysed reaction is N-acetyl-L-glutamate + ATP = N-acetyl-L-glutamyl 5-phosphate + ADP. Its pathway is amino-acid biosynthesis; L-arginine biosynthesis; N(2)-acetyl-L-ornithine from L-glutamate: step 2/4. Catalyzes the ATP-dependent phosphorylation of N-acetyl-L-glutamate. The protein is Acetylglutamate kinase of Anaeromyxobacter dehalogenans (strain 2CP-C).